Reading from the N-terminus, the 336-residue chain is MSALKTHIAKVAAGTALSFEEAREAFDIIMSGDATPGQIGGFLMALRVRGETVSEISGAVATMRAKMLRVEAPAGAIDIVGTGGDNSHSVNISTGSAFVIAAAGVPVAKHGNRGLSSLTGAADVLIALGVKIDIPPDAIGRCIHEAGVGFMFAPAHHPAMKHVGPTRVELGTRTIFNLLGPLSNPAGVVRQMVGVFLPEWILPVAETLKALGTEHAWVVHGDGYDEITTTGETQVAELIGGEIRSFTLTPEEVGLKRHTKDELRGGDAAYNANALRDMLDGAAGAYRDTVLMNAGAGLVIAGKATTLGDGIALAAQAIDSGRALQVLDRLVEISNG.

5-phospho-alpha-D-ribose 1-diphosphate contacts are provided by residues G81, 84-85 (GD), S89, 91-94 (NIST), 109-117 (KHGNRGLSS), and A121. G81 lines the anthranilate pocket. S93 is a Mg(2+) binding site. Residue N112 coordinates anthranilate. An anthranilate-binding site is contributed by R167. Mg(2+)-binding residues include D225 and E226.

Belongs to the anthranilate phosphoribosyltransferase family. Homodimer. Requires Mg(2+) as cofactor.

It carries out the reaction N-(5-phospho-beta-D-ribosyl)anthranilate + diphosphate = 5-phospho-alpha-D-ribose 1-diphosphate + anthranilate. The protein operates within amino-acid biosynthesis; L-tryptophan biosynthesis; L-tryptophan from chorismate: step 2/5. Its function is as follows. Catalyzes the transfer of the phosphoribosyl group of 5-phosphorylribose-1-pyrophosphate (PRPP) to anthranilate to yield N-(5'-phosphoribosyl)-anthranilate (PRA). The protein is Anthranilate phosphoribosyltransferase of Mesorhizobium japonicum (strain LMG 29417 / CECT 9101 / MAFF 303099) (Mesorhizobium loti (strain MAFF 303099)).